Here is a 339-residue protein sequence, read N- to C-terminus: Fructose-1,6-bisphosphatase class 1 (339 aa).

4 residues coordinate Mg(2+): glutamate 91, aspartate 113, leucine 115, and aspartate 116. Substrate contacts are provided by residues 116-119 (DGSS), asparagine 208, and lysine 274. Glutamate 280 contacts Mg(2+).

The protein belongs to the FBPase class 1 family. Homotetramer. The cofactor is Mg(2+).

It localises to the cytoplasm. The catalysed reaction is beta-D-fructose 1,6-bisphosphate + H2O = beta-D-fructose 6-phosphate + phosphate. Its pathway is carbohydrate biosynthesis; gluconeogenesis. The protein is Fructose-1,6-bisphosphatase class 1 of Cupriavidus pinatubonensis (strain JMP 134 / LMG 1197) (Cupriavidus necator (strain JMP 134)).